Consider the following 478-residue polypeptide: JmjC domain-containing histone demethylation protein 1 (478 aa).

Residues 6-70 form a PHD-type zinc finger; sequence VKCHFCKKDD…HVESFKCTLH (65 aa). Positions 242–401 constitute a JmjC domain; sequence SHVESFKDGI…TQLNVVEIEH (160 aa). Thr294 is a substrate binding site. Fe cation is bound by residues His297 and Asp299. Lys314 contributes to the substrate binding site. His369 is a Fe cation binding site.

It belongs to the JHDM1 histone demethylase family. It depends on Fe(2+) as a cofactor.

Its subcellular location is the nucleus. The catalysed reaction is N(6),N(6)-dimethyl-L-lysyl(36)-[histone H3] + 2 2-oxoglutarate + 2 O2 = L-lysyl(36)-[histone H3] + 2 formaldehyde + 2 succinate + 2 CO2. Histone demethylase that specifically demethylates 'Lys-36' of histone H3, thereby playing a central role in histone code. The protein is JmjC domain-containing histone demethylation protein 1 (JHD1) of Kluyveromyces lactis (strain ATCC 8585 / CBS 2359 / DSM 70799 / NBRC 1267 / NRRL Y-1140 / WM37) (Yeast).